A 240-amino-acid polypeptide reads, in one-letter code: Proteasome subunit beta type-1 (240 aa).

Met1 carries the post-translational modification N-acetylmethionine. The propeptide occupies 1 to 27 (MLSTAAYRDVERELGMGPHGSAGPVQL). Ser57 carries an O-linked (GlcNAc) serine glycan. A phosphoserine mark is found at Ser61 and Ser67. Tyr149 is subject to Phosphotyrosine. At Ser161 the chain carries Phosphoserine. Lys203 carries the post-translational modification N6-acetyllysine. Residue Ser208 is glycosylated (O-linked (GlcNAc) serine).

It belongs to the peptidase T1B family. As to quaternary structure, the 26S proteasome consists of a 20S proteasome core and two 19S regulatory subunits. The 20S proteasome core is a barrel-shaped complex made of 28 subunits that are arranged in four stacked rings. The two outer rings are each formed by seven alpha subunits, and the two inner rings are formed by seven beta subunits. The proteolytic activity is exerted by three beta-subunits PSMB5, PSMB6 and PSMB7. Interacts with SERPINB2. Interacts with RFPL4A. Detected in liver (at protein level).

The protein localises to the cytoplasm. It localises to the nucleus. Non-catalytic component of the 20S core proteasome complex involved in the proteolytic degradation of most intracellular proteins. This complex plays numerous essential roles within the cell by associating with different regulatory particles. Associated with two 19S regulatory particles, forms the 26S proteasome and thus participates in the ATP-dependent degradation of ubiquitinated proteins. The 26S proteasome plays a key role in the maintenance of protein homeostasis by removing misfolded or damaged proteins that could impair cellular functions, and by removing proteins whose functions are no longer required. Associated with the PA200 or PA28, the 20S proteasome mediates ubiquitin-independent protein degradation. This type of proteolysis is required in several pathways including spermatogenesis (20S-PA200 complex) or generation of a subset of MHC class I-presented antigenic peptides (20S-PA28 complex). This is Proteasome subunit beta type-1 (Psmb1) from Mus musculus (Mouse).